The primary structure comprises 462 residues: Nitrogenase iron-iron protein beta chain (462 aa).

Residues Cys-20, Cys-45, Cys-104, and Ser-143 each coordinate [8Fe-7S] cluster.

This sequence belongs to the NifD/NifK/NifE/NifN family. In terms of assembly, hexamer of two alpha, two beta, and two delta chains. [8Fe-7S] cluster serves as cofactor.

It catalyses the reaction N2 + 8 reduced [2Fe-2S]-[ferredoxin] + 16 ATP + 16 H2O = H2 + 8 oxidized [2Fe-2S]-[ferredoxin] + 2 NH4(+) + 16 ADP + 16 phosphate + 6 H(+). In terms of biological role, this iron-iron protein is part of the nitrogenase complex that catalyzes the key enzymatic reactions in nitrogen fixation. Other nitrogenase complexes utilize a molybdenum-iron protein or a vanadium-iron protein. The sequence is that of Nitrogenase iron-iron protein beta chain (anfK) from Azotobacter vinelandii.